A 297-amino-acid chain; its full sequence is HTH-type transcriptional regulator ArgP (297 aa).

In terms of domain architecture, HTH lysR-type spans 4 to 60 (PDYRTLQALDAVIRERGFERAAQKLCITQSAVSQRIKQLENMFGQPLLVRTVPPRPT). A DNA-binding region (H-T-H motif) is located at residues 21–40 (FERAAQKLCITQSAVSQRIK).

The protein belongs to the LysR transcriptional regulatory family. Homodimer.

In terms of biological role, controls the transcription of genes involved in arginine and lysine metabolism. This Klebsiella pneumoniae subsp. pneumoniae (strain ATCC 700721 / MGH 78578) protein is HTH-type transcriptional regulator ArgP.